A 552-amino-acid chain; its full sequence is DUF724 domain-containing protein 10 (552 aa).

Residues 308–361 (SSLTQGSGDKTEVETQRKTFPKKTLPRNQNGSGNDSTLENENSNRKRKREENLC) form a disordered region. The segment covering 333–348 (PRNQNGSGNDSTLENE) has biased composition (polar residues). Positions 371 to 543 (ILFEKKLPVW…LEFQATASAP (173 aa)) constitute a DUF724 domain.

As to expression, expressed at low levels in leaves, stems, flowers and siliques.

May be involved in the polar growth of plant cells via transportation of RNAs. In Arabidopsis thaliana (Mouse-ear cress), this protein is DUF724 domain-containing protein 10.